The primary structure comprises 292 residues: GTP cyclohydrolase FolE2 (292 aa).

This sequence belongs to the GTP cyclohydrolase IV family.

It carries out the reaction GTP + H2O = 7,8-dihydroneopterin 3'-triphosphate + formate + H(+). It participates in cofactor biosynthesis; 7,8-dihydroneopterin triphosphate biosynthesis; 7,8-dihydroneopterin triphosphate from GTP: step 1/1. Converts GTP to 7,8-dihydroneopterin triphosphate. This Staphylococcus aureus (strain Mu50 / ATCC 700699) protein is GTP cyclohydrolase FolE2.